The chain runs to 380 residues: 4-hydroxy-3-methylbut-2-en-1-yl diphosphate synthase (flavodoxin) (380 aa).

Residues Cys-279, Cys-282, Cys-314, and Glu-321 each coordinate [4Fe-4S] cluster.

This sequence belongs to the IspG family. [4Fe-4S] cluster is required as a cofactor.

The enzyme catalyses (2E)-4-hydroxy-3-methylbut-2-enyl diphosphate + oxidized [flavodoxin] + H2O + 2 H(+) = 2-C-methyl-D-erythritol 2,4-cyclic diphosphate + reduced [flavodoxin]. It participates in isoprenoid biosynthesis; isopentenyl diphosphate biosynthesis via DXP pathway; isopentenyl diphosphate from 1-deoxy-D-xylulose 5-phosphate: step 5/6. Its function is as follows. Converts 2C-methyl-D-erythritol 2,4-cyclodiphosphate (ME-2,4cPP) into 1-hydroxy-2-methyl-2-(E)-butenyl 4-diphosphate. This Tropheryma whipplei (strain TW08/27) (Whipple's bacillus) protein is 4-hydroxy-3-methylbut-2-en-1-yl diphosphate synthase (flavodoxin).